A 344-amino-acid polypeptide reads, in one-letter code: Heptahelical transmembrane protein 3 (344 aa).

Residues 1 to 76 (MKRRRSAKKS…AFSWHNETLN (76 aa)) lie on the Cytoplasmic side of the membrane. Residues 77 to 97 (IWTHLIGFGIFLWMTVVSCLE) form a helical membrane-spanning segment. At 98–147 (TTEISLAGVFNGMAGVRICLSSNQTLLHDSNVTHHISCLTSQGEAIPKWP) the chain is on the extracellular side. A helical transmembrane segment spans residues 148–168 (WLVYLVGAMGCLICSSVSHLL). Residues 169–184 (ACHSKRFNVFFWRLDY) are Cytoplasmic-facing. A helical transmembrane segment spans residues 185–205 (AGISLMIVASFFAPIYYAFSC). Topologically, residues 206 to 210 (HPNFR) are extracellular. Residues 211–231 (LLYLSSISILGLLAIITLLSP) form a helical membrane-spanning segment. Residues 232–244 (ALSTPRFRPFRAN) are Cytoplasmic-facing. A helical transmembrane segment spans residues 245–265 (LFLAMGSSAVIPATHVLCLYW). The Extracellular portion of the chain corresponds to 266–269 (DHPN). The helical transmembrane segment at 270-290 (VFIALGYEIATALSYFVGATF) threads the bilayer. At 291 to 312 (YVSRVPERWKPGAFDMAGHSHQ) the chain is on the cytoplasmic side. Residues 313–333 (IFHVFVVMGALAHCVTTLLII) form a helical membrane-spanning segment. Residues 334–344 (DFSRASPSCGF) lie on the Extracellular side of the membrane.

The protein belongs to the ADIPOR family. Expressed in roots and flowers.

The protein resides in the membrane. Functionally, may play a role in abiotic stress response. In Arabidopsis thaliana (Mouse-ear cress), this protein is Heptahelical transmembrane protein 3 (HHP3).